A 267-amino-acid polypeptide reads, in one-letter code: Tryptophan synthase alpha chain (267 aa).

Catalysis depends on proton acceptor residues Glu47 and Asp58.

It belongs to the TrpA family. Tetramer of two alpha and two beta chains.

It carries out the reaction (1S,2R)-1-C-(indol-3-yl)glycerol 3-phosphate + L-serine = D-glyceraldehyde 3-phosphate + L-tryptophan + H2O. It functions in the pathway amino-acid biosynthesis; L-tryptophan biosynthesis; L-tryptophan from chorismate: step 5/5. Its function is as follows. The alpha subunit is responsible for the aldol cleavage of indoleglycerol phosphate to indole and glyceraldehyde 3-phosphate. This chain is Tryptophan synthase alpha chain, found in Chlorobium chlorochromatii (strain CaD3).